The following is a 229-amino-acid chain: Cytochrome c oxidase subunit 2 (229 aa).

Over 1–14 (MPTPNQTNFQDAAS) the chain is Mitochondrial intermembrane. A helical transmembrane segment spans residues 15-45 (PLMEELTHFHDHTLMIVFMISLLVLYILLSM). At 46–59 (LSTKLTHTNTANAQ) the chain is on the mitochondrial matrix side. The helical transmembrane segment at 60–87 (QAEMVWTILPAIILITIALPSLQILYMM) threads the bilayer. At 88 to 229 (DEINKPHMTI…DLWLAMIDTL (142 aa)) the chain is on the mitochondrial intermembrane side. Positions 161, 196, 198, 200, 204, and 207 each coordinate Cu cation. Position 198 (E198) interacts with Mg(2+).

Belongs to the cytochrome c oxidase subunit 2 family. In terms of assembly, component of the cytochrome c oxidase (complex IV, CIV), a multisubunit enzyme composed of 14 subunits. The complex is composed of a catalytic core of 3 subunits MT-CO1, MT-CO2 and MT-CO3, encoded in the mitochondrial DNA, and 11 supernumerary subunits COX4I, COX5A, COX5B, COX6A, COX6B, COX6C, COX7A, COX7B, COX7C, COX8 and NDUFA4, which are encoded in the nuclear genome. The complex exists as a monomer or a dimer and forms supercomplexes (SCs) in the inner mitochondrial membrane with NADH-ubiquinone oxidoreductase (complex I, CI) and ubiquinol-cytochrome c oxidoreductase (cytochrome b-c1 complex, complex III, CIII), resulting in different assemblies (supercomplex SCI(1)III(2)IV(1) and megacomplex MCI(2)III(2)IV(2)). Found in a complex with TMEM177, COA6, COX18, COX20, SCO1 and SCO2. Interacts with TMEM177 in a COX20-dependent manner. Interacts with COX20. Interacts with COX16. Cu cation serves as cofactor.

The protein resides in the mitochondrion inner membrane. The enzyme catalyses 4 Fe(II)-[cytochrome c] + O2 + 8 H(+)(in) = 4 Fe(III)-[cytochrome c] + 2 H2O + 4 H(+)(out). Functionally, component of the cytochrome c oxidase, the last enzyme in the mitochondrial electron transport chain which drives oxidative phosphorylation. The respiratory chain contains 3 multisubunit complexes succinate dehydrogenase (complex II, CII), ubiquinol-cytochrome c oxidoreductase (cytochrome b-c1 complex, complex III, CIII) and cytochrome c oxidase (complex IV, CIV), that cooperate to transfer electrons derived from NADH and succinate to molecular oxygen, creating an electrochemical gradient over the inner membrane that drives transmembrane transport and the ATP synthase. Cytochrome c oxidase is the component of the respiratory chain that catalyzes the reduction of oxygen to water. Electrons originating from reduced cytochrome c in the intermembrane space (IMS) are transferred via the dinuclear copper A center (CU(A)) of subunit 2 and heme A of subunit 1 to the active site in subunit 1, a binuclear center (BNC) formed by heme A3 and copper B (CU(B)). The BNC reduces molecular oxygen to 2 water molecules using 4 electrons from cytochrome c in the IMS and 4 protons from the mitochondrial matrix. In Pelomedusa subrufa (African side-necked turtle), this protein is Cytochrome c oxidase subunit 2 (MT-CO2).